A 187-amino-acid polypeptide reads, in one-letter code: Small monomeric GTPase RhbA (187 aa).

Positions 17, 18, 19, 20, 21, 22, 33, and 34 each coordinate GDP. Serine 17 is a GTP binding site. Residues glycine 19, lysine 20, serine 21, serine 22, and valine 33 each contribute to the GTP site. Residue serine 21 coordinates Mg(2+). The GTP site is built by tyrosine 36, threonine 39, asparagine 120, aspartate 123, and alanine 152. The short motif at 36 to 44 is the Effector region element; it reads YYPTIENTF. Threonine 39 contacts Mg(2+). Positions 120, 123, and 152 each coordinate GDP. Cysteine 184 is lipidated: S-farnesyl cysteine.

The protein belongs to the small GTPase superfamily. Rheb family. Farnesylation is important for efficiently activating mTORC1-mediated signaling.

Its subcellular location is the cell membrane. It carries out the reaction GTP + H2O = GDP + phosphate + H(+). With respect to regulation, alternates between an inactive form bound to GDP and an active form bound to GTP. Small GTPase that acts as an allosteric activator of the canonical TOR pathway, an evolutionarily conserved central nutrient sensor that stimulates anabolic reactions and macromolecule biosynthesis to promote cellular biomass generation and growth. Plays a role in virulence. This Aspergillus fumigatus (strain ATCC MYA-4609 / CBS 101355 / FGSC A1100 / Af293) (Neosartorya fumigata) protein is Small monomeric GTPase RhbA.